The sequence spans 133 residues: Ribosome-binding factor A (133 aa).

This sequence belongs to the RbfA family. Monomer. Binds 30S ribosomal subunits, but not 50S ribosomal subunits or 70S ribosomes.

It is found in the cytoplasm. In terms of biological role, one of several proteins that assist in the late maturation steps of the functional core of the 30S ribosomal subunit. Associates with free 30S ribosomal subunits (but not with 30S subunits that are part of 70S ribosomes or polysomes). Required for efficient processing of 16S rRNA. May interact with the 5'-terminal helix region of 16S rRNA. The sequence is that of Ribosome-binding factor A from Proteus mirabilis (strain HI4320).